The primary structure comprises 297 residues: tRNA dimethylallyltransferase (297 aa).

An ATP-binding site is contributed by 10–17 (GITASGKS). Residue 12-17 (TASGKS) coordinates substrate. The segment at 36–39 (DSKQ) is interaction with substrate tRNA.

Belongs to the IPP transferase family. In terms of assembly, monomer. Mg(2+) is required as a cofactor.

The catalysed reaction is adenosine(37) in tRNA + dimethylallyl diphosphate = N(6)-dimethylallyladenosine(37) in tRNA + diphosphate. Its function is as follows. Catalyzes the transfer of a dimethylallyl group onto the adenine at position 37 in tRNAs that read codons beginning with uridine, leading to the formation of N6-(dimethylallyl)adenosine (i(6)A). The chain is tRNA dimethylallyltransferase from Wolbachia pipientis subsp. Culex pipiens (strain wPip).